The chain runs to 277 residues: uncharacterized protein (277 aa).

3 Solcar repeats span residues 1–84 (MDQA…SKRV), 96–179 (ISVL…LKLW), and 184–268 (PTSL…VGMH). 6 consecutive transmembrane segments (helical) span residues 3–24 (QAIA…LDLA), 60–80 (LSIN…IYDF), 102–122 (LCSS…IWVV), 152–172 (CYAG…QFMA), 190–210 (IFMS…LLVI), and 240–261 (FYKG…TFLV).

Belongs to the mitochondrial carrier (TC 2.A.29) family.

The protein resides in the mitochondrion inner membrane. This is an uncharacterized protein from Schizosaccharomyces pombe (strain 972 / ATCC 24843) (Fission yeast).